The primary structure comprises 253 residues: Trypsin delta (253 aa).

A signal peptide spans 1 to 22; sequence MLKFVILLSAVACALGGTVPEG. The propeptide at 23–30 is activation peptide; that stretch reads LLPQLDGR. A Peptidase S1 domain is found at 31-253; that stretch reads IVGGSATTIS…ALRSWVISNA (223 aa). A disulfide bond links Cys56 and Cys72. Active-site charge relay system residues include His71 and Asp116. Cystine bridges form between Cys180/Cys197 and Cys206/Cys230. Residue Ser210 is the Charge relay system of the active site.

Belongs to the peptidase S1 family.

It is found in the secreted. It localises to the extracellular space. It carries out the reaction Preferential cleavage: Arg-|-Xaa, Lys-|-Xaa.. This is Trypsin delta from Drosophila melanogaster (Fruit fly).